We begin with the raw amino-acid sequence, 570 residues long: Sulfite reductase [NADPH] hemoprotein beta-component (570 aa).

[4Fe-4S] cluster is bound by residues Cys434, Cys440, Cys479, and Cys483. Cys483 serves as a coordination point for siroheme.

The protein belongs to the nitrite and sulfite reductase 4Fe-4S domain family. As to quaternary structure, alpha(8)-beta(8). The alpha component is a flavoprotein, the beta component is a hemoprotein. The cofactor is siroheme. Requires [4Fe-4S] cluster as cofactor.

It catalyses the reaction hydrogen sulfide + 3 NADP(+) + 3 H2O = sulfite + 3 NADPH + 4 H(+). The protein operates within sulfur metabolism; hydrogen sulfide biosynthesis; hydrogen sulfide from sulfite (NADPH route): step 1/1. Component of the sulfite reductase complex that catalyzes the 6-electron reduction of sulfite to sulfide. This is one of several activities required for the biosynthesis of L-cysteine from sulfate. This is Sulfite reductase [NADPH] hemoprotein beta-component from Salmonella heidelberg (strain SL476).